Consider the following 66-residue polypeptide: Phylloseptin-S6 (66 aa).

A signal peptide spans 1-22; sequence MAFLKKSLFLVLFLGLVSLSIC. Positions 23-46 are excised as a propeptide; the sequence is EEEKRETEEEEHDQEEDDKSEEKR. The disordered stretch occupies residues 25-44; sequence EKRETEEEEHDQEEDDKSEE. The segment covering 30–41 has biased composition (acidic residues); it reads EEEEHDQEEDDK. Leu-65 carries the leucine amide modification.

It belongs to the frog skin active peptide (FSAP) family. Phylloseptin subfamily. As to expression, expressed by the skin glands.

It localises to the secreted. It is found in the target cell membrane. Functionally, antimicrobial peptide with high activity against Gram-positive bacteria, low activity against Gram-negative bacteria, and moderate activity against fungi. Acts by causing bacterial membrane disruption inducing leakage of the intracellular content followed by cell death. It adopts an alpha-helical amphipathic structure in membrane environments. Also shows highly potent antiparasitic activity against Leishmania species. Shows moderate hemolytic activity on human erythrocytes. Is also active on human monocytes. The sequence is that of Phylloseptin-S6 from Phyllomedusa sauvagei (Sauvage's leaf frog).